The following is a 96-amino-acid chain: UPF0125 protein YfjF (96 aa).

This sequence belongs to the UPF0125 (RnfH) family.

In Escherichia coli O157:H7, this protein is UPF0125 protein YfjF (yfjF).